Reading from the N-terminus, the 544-residue chain is 4-coumarate--CoA ligase 1 (544 aa).

6 residues coordinate ATP: S190, S191, G192, T193, T194, and K198. Y240 lines the (E)-4-coumaroyl-AMP pocket. K261 contributes to the CoA binding site. Residues 263–332 (DIVPFLELIQ…AKFPNAKLGQ (70 aa)) are SBD1. (E)-4-coumaroyl-AMP is bound by residues A310, Q332, G333, T337, and M345. Q332, G333, and T337 together coordinate ATP. Residues 333–400 (GYGMTEAGPV…IRGDQIMKGY (68 aa)) form an SBD2 region. The ATP site is built by D421 and R436. (E)-4-coumaroyl-AMP contacts are provided by K438 and K442. Residues K444 and G445 each coordinate CoA. K527 contacts ATP.

The protein belongs to the ATP-dependent AMP-binding enzyme family. The cofactor is Mg(2+).

The catalysed reaction is (E)-4-coumarate + ATP + CoA = (E)-4-coumaroyl-CoA + AMP + diphosphate. It catalyses the reaction (E)-4-coumarate + ATP + H(+) = (E)-4-coumaroyl-AMP + diphosphate. The enzyme catalyses (E)-4-coumaroyl-AMP + CoA = (E)-4-coumaroyl-CoA + AMP + H(+). It participates in phytoalexin biosynthesis; 3,4',5-trihydroxystilbene biosynthesis; 3,4',5-trihydroxystilbene from trans-4-coumarate: step 1/2. Functionally, carboxylate--CoA ligase that may use 4-coumarate as substrate. Follows a two-step reaction mechanism, wherein the carboxylate substrate first undergoes adenylation by ATP, followed by a thioesterification in the presence of CoA to yield the final CoA thioester. The chain is 4-coumarate--CoA ligase 1 (4CL1) from Petroselinum crispum (Parsley).